Reading from the N-terminus, the 235-residue chain is AA9 family lytic polysaccharide monooxygenase D (235 aa).

Residues Met1–Gly18 form the signal peptide. A Cu(2+)-binding site is contributed by His19. An O-linked (Man...) serine glycan is attached at Ser29. Residues Cys61 and Cys181 are joined by a disulfide bond. Cu(2+) is bound at residue His94. O2-binding residues include His167 and Gln176. Tyr178 provides a ligand contact to Cu(2+). Residue Asn221 is glycosylated (N-linked (GlcNAc...) asparagine).

It belongs to the polysaccharide monooxygenase AA9 family. Requires Cu(2+) as cofactor.

It is found in the secreted. The enzyme catalyses [(1-&gt;4)-beta-D-glucosyl]n+m + reduced acceptor + O2 = 4-dehydro-beta-D-glucosyl-[(1-&gt;4)-beta-D-glucosyl]n-1 + [(1-&gt;4)-beta-D-glucosyl]m + acceptor + H2O.. In terms of biological role, lytic polysaccharide monooxygenase (LPMO) that depolymerizes crystalline and amorphous polysaccharides via the oxidation of scissile alpha- or beta-(1-4)-glycosidic bonds, yielding only C1 oxidation products. Catalysis by LPMOs requires the reduction of the active-site copper from Cu(II) to Cu(I) by a reducing agent and H(2)O(2) or O(2) as a cosubstrate. This chain is AA9 family lytic polysaccharide monooxygenase D, found in Phanerodontia chrysosporium (White-rot fungus).